A 155-amino-acid polypeptide reads, in one-letter code: SsrA-binding protein (155 aa).

It belongs to the SmpB family.

The protein localises to the cytoplasm. Required for rescue of stalled ribosomes mediated by trans-translation. Binds to transfer-messenger RNA (tmRNA), required for stable association of tmRNA with ribosomes. tmRNA and SmpB together mimic tRNA shape, replacing the anticodon stem-loop with SmpB. tmRNA is encoded by the ssrA gene; the 2 termini fold to resemble tRNA(Ala) and it encodes a 'tag peptide', a short internal open reading frame. During trans-translation Ala-aminoacylated tmRNA acts like a tRNA, entering the A-site of stalled ribosomes, displacing the stalled mRNA. The ribosome then switches to translate the ORF on the tmRNA; the nascent peptide is terminated with the 'tag peptide' encoded by the tmRNA and targeted for degradation. The ribosome is freed to recommence translation, which seems to be the essential function of trans-translation. This is SsrA-binding protein from Geobacillus kaustophilus (strain HTA426).